We begin with the raw amino-acid sequence, 1086 residues long: NAD(P) transhydrogenase, mitochondrial (1086 aa).

The transit peptide at 1 to 43 (MANLLKTVVTGCSCPFLSNLGSCKVLPGKKNFLRAFHTHRILW) directs the protein to the mitochondrion. The Mitochondrial matrix portion of the chain corresponds to 44–474 (CKAPVKPGIP…TITPFRKTMT (431 aa)). N6-acetyllysine is present on Lys70. Residue Lys117 is modified to N6-succinyllysine. Position 182–184 (182–184 (RVT)) interacts with NAD(+). An N6-succinyllysine modification is found at Lys224. NAD(+) is bound by residues Val237, 257-259 (DTR), and Gly287. Lys294 is subject to N6-succinyllysine. Residues Glu300 and Leu319 each contribute to the NAD(+) site. An N6-succinyllysine modification is found at Lys331. Lys397 is modified (N6-acetyllysine). Helical transmembrane passes span 475-493 (SASVYTAGLTGILGLGIAA), 501-521 (MVTTFGLAGIVGYHTVWGVTP), 527-546 (LMSVTNAISGLTAVGGLVLM), and 558-578 (GLAALATFISSVNIAGGFLVT). The Mitochondrial matrix portion of the chain corresponds to 579-595 (QRMLDMFKRPTDPPEYN). The next 5 helical transmembrane spans lie at 596-616 (YLYLLPAGTFVGGYLASLYSG), 622-642 (IMYLGSGLCCVGALAGLSTQG), 646-666 (LGNALGMIGVAGGLAATLGGL), 672-691 (LLAQMSGAMALGGTIGLTIA), and 702-722 (LVAAFHSLVGLAAVLTCIAEY). Residues 723–739 (IIEYPHFATDAAANLTK) are Cytoplasmic-facing. A run of 5 helical transmembrane segments spans residues 740–760 (IVAYLGTYIGGVTFSGSLVAY), 778–797 (HLLNAGLLAASVGGIIPFMM), 801–819 (FTTGITCLGSVSALSAVMG), 833–853 (VVITVLNSYSGWALCAEGFLL), and 857–879 (LLTIVGALIGSSGAILSYIMCVA). At 880–1086 (MNRSLANVIL…QAKVRESYQK (207 aa)) the chain is on the mitochondrial matrix side. Residues Tyr933, 965 to 970 (VAGRMP), 1007 to 1011 (GANDT), 1026 to 1027 (GM), 1042 to 1049 (KRSLGVGY), and 1068 to 1069 (DA) contribute to the NADP(+) site. Position 1079 is an N6-succinyllysine (Lys1079).

It in the N-terminal section; belongs to the AlaDH/PNT family. In the C-terminal section; belongs to the PNT beta subunit family. Homodimer.

The protein resides in the mitochondrion inner membrane. It carries out the reaction NAD(+) + NADPH + H(+)(in) = NADH + NADP(+) + H(+)(out). Functionally, the transhydrogenation between NADH and NADP is coupled to respiration and ATP hydrolysis and functions as a proton pump across the membrane. May play a role in reactive oxygen species (ROS) detoxification in the adrenal gland. The sequence is that of NAD(P) transhydrogenase, mitochondrial (NNT) from Ovis aries (Sheep).